The following is an 899-amino-acid chain: Solute carrier family 12 member 9 (899 aa).

Topologically, residues 1–44 (MTSESSPLLHYRLFSVSDGGLGPPDSSPIMTDAVTVGTGPTQRK) are cytoplasmic. A helical membrane pass occupies residues 45-65 (LSTFFGVVVPTVLSMFSIVVF). Residues 66-80 (MRIGFVVGHAGLLQS) are Extracellular-facing. The chain crosses the membrane as a helical span at residues 81–101 (LLMLFVAYVIIWLTVLSVCAI). The Cytoplasmic segment spans residues 102-127 (STNGAVQGGGAYFMISRTLGPEFGGS). A helical membrane pass occupies residues 128 to 148 (IGLMFYLANVFACGVYVLGLV). Over 149–176 (EAVLDVFGRDPSDVTDSLRSLPQGYGYS) the chain is Extracellular. A helical membrane pass occupies residues 177–197 (FLYASIILLLCMAICLVGASI). At 198 to 202 (YSQAS) the chain is on the cytoplasmic side. The chain crosses the membrane as a helical span at residues 203 to 223 (FFIFLLVFVVLLTILISFLAV). At 224–266 (RPLTVSIRHGGNVTMTGVYTGINSSTLHNNLQADYSLDYTTGN) the chain is on the extracellular side. 2 N-linked (GlcNAc...) asparagine glycosylation sites follow: asparagine 235 and asparagine 246. A helical membrane pass occupies residues 267–287 (LMNFATVFAVMFNGCTGIMAG). Over 288–304 (CNLSGELKQPSRSIPMG) the chain is Cytoplasmic. A helical membrane pass occupies residues 305–325 (TIIAVIITFFVYLILFIFTAF). Residues 326-347 (TCDRTLLREDYGFFRSINIWPP) lie on the Extracellular side of the membrane. The chain crosses the membrane as a helical span at residues 348 to 368 (FVLIGVYATSLSASMSTLIGA). Over 369–393 (SRILHALAKDDLFGVLLAPAKLVSK) the chain is Cytoplasmic. A helical membrane pass occupies residues 394–414 (GGNPWGAVVYTWALVQLVLLA). Residues 415–419 (GKLNT) lie on the Extracellular side of the membrane. Residues 420-440 (IAGIVTVFYLIAYAAIDLACL) form a helical membrane-spanning segment. The Cytoplasmic portion of the chain corresponds to 441-469 (ALEWASAPNFRPTFRFFSWHTCLLGILSS). The chain crosses the membrane as a helical span at residues 470 to 490 (LVMMFLINPAYASGSIVLLLL). Topologically, residues 491–739 (LLGSIHFRSS…PLDLLRPQAS (249 aa)) are extracellular. A helical membrane pass occupies residues 740-760 (AYVDVCSLFLLQMACILNMAA). Residues 761–899 (SWRRYQLRVF…GLTPVTCTEL (139 aa)) are Cytoplasmic-facing.

It belongs to the SLC12A transporter family.

Its subcellular location is the cell membrane. It is found in the lysosome membrane. Its function is as follows. Seems to correspond to a subunit of a multimeric transport system and thus, additional subunits may be required for its function. May play a role in lysosomal ion flux and osmoregulation. The protein is Solute carrier family 12 member 9 (slc12a9) of Xenopus laevis (African clawed frog).